Here is a 329-residue protein sequence, read N- to C-terminus: Flotillin-like protein FloA (329 aa).

2 helical membrane passes run 4–24 and 26–46; these read IAFILIVGAILVFISLFFAIV and VGLWISAFAANVRVSIFTLIG.

This sequence belongs to the flotillin-like FloA family. In terms of assembly, homooligomerizes.

The protein resides in the cell membrane. The protein localises to the membrane raft. Its function is as follows. Found in functional membrane microdomains (FMM) that may be equivalent to eukaryotic membrane rafts. FMMs are highly dynamic and increase in number as cells age. Flotillins are thought to be important factors in membrane fluidity. The sequence is that of Flotillin-like protein FloA from Acetivibrio thermocellus (strain ATCC 27405 / DSM 1237 / JCM 9322 / NBRC 103400 / NCIMB 10682 / NRRL B-4536 / VPI 7372) (Clostridium thermocellum).